The chain runs to 393 residues: NAD(P)H-quinone oxidoreductase subunit H, chloroplastic (393 aa).

This sequence belongs to the complex I 49 kDa subunit family. In terms of assembly, NDH is composed of at least 16 different subunits, 5 of which are encoded in the nucleus.

It is found in the plastid. Its subcellular location is the chloroplast thylakoid membrane. The enzyme catalyses a plastoquinone + NADH + (n+1) H(+)(in) = a plastoquinol + NAD(+) + n H(+)(out). It carries out the reaction a plastoquinone + NADPH + (n+1) H(+)(in) = a plastoquinol + NADP(+) + n H(+)(out). In terms of biological role, NDH shuttles electrons from NAD(P)H:plastoquinone, via FMN and iron-sulfur (Fe-S) centers, to quinones in the photosynthetic chain and possibly in a chloroplast respiratory chain. The immediate electron acceptor for the enzyme in this species is believed to be plastoquinone. Couples the redox reaction to proton translocation, and thus conserves the redox energy in a proton gradient. The sequence is that of NAD(P)H-quinone oxidoreductase subunit H, chloroplastic from Amborella trichopoda.